The chain runs to 230 residues: MAYPLQLGFQDATSPIMEELLHFHDHTLMIVFLISSLVLYIISTMLTTKLTHTNTMDAQEVETIWTILPAIILILIALPSLRILYMMDEINNPNLTIKTLGHQWYWSYEYSDYEDLSFDSYMIPTQDLLPGQLRLLEVDNHLVLPIELPIRMLISSEDVLHSWALPSMGLKTDAIPGRLNQATITSTRPGLFYGQCSEICGSNHSFMPIVLEMVPLKYFENWTSSMMSTS.

At 1–14 the chain is on the mitochondrial intermembrane side; it reads MAYPLQLGFQDATS. A helical transmembrane segment spans residues 15–45; that stretch reads PIMEELLHFHDHTLMIVFLISSLVLYIISTM. The Mitochondrial matrix segment spans residues 46–59; that stretch reads LTTKLTHTNTMDAQ. Residues 60-87 traverse the membrane as a helical segment; the sequence is EVETIWTILPAIILILIALPSLRILYMM. Over 88–230 the chain is Mitochondrial intermembrane; that stretch reads DEINNPNLTI…NWTSSMMSTS (143 aa). The Cu cation site is built by His161, Cys196, Glu198, Cys200, His204, and Met207. Glu198 lines the Mg(2+) pocket. Phosphotyrosine is present on Tyr218.

It belongs to the cytochrome c oxidase subunit 2 family. Component of the cytochrome c oxidase (complex IV, CIV), a multisubunit enzyme composed of 14 subunits. The complex is composed of a catalytic core of 3 subunits MT-CO1, MT-CO2 and MT-CO3, encoded in the mitochondrial DNA, and 11 supernumerary subunits COX4I, COX5A, COX5B, COX6A, COX6B, COX6C, COX7A, COX7B, COX7C, COX8 and NDUFA4, which are encoded in the nuclear genome. The complex exists as a monomer or a dimer and forms supercomplexes (SCs) in the inner mitochondrial membrane with NADH-ubiquinone oxidoreductase (complex I, CI) and ubiquinol-cytochrome c oxidoreductase (cytochrome b-c1 complex, complex III, CIII), resulting in different assemblies (supercomplex SCI(1)III(2)IV(1) and megacomplex MCI(2)III(2)IV(2)). Found in a complex with TMEM177, COA6, COX18, COX20, SCO1 and SCO2. Interacts with TMEM177 in a COX20-dependent manner. Interacts with COX20. Interacts with COX16. Requires Cu cation as cofactor.

It is found in the mitochondrion inner membrane. It carries out the reaction 4 Fe(II)-[cytochrome c] + O2 + 8 H(+)(in) = 4 Fe(III)-[cytochrome c] + 2 H2O + 4 H(+)(out). Functionally, component of the cytochrome c oxidase, the last enzyme in the mitochondrial electron transport chain which drives oxidative phosphorylation. The respiratory chain contains 3 multisubunit complexes succinate dehydrogenase (complex II, CII), ubiquinol-cytochrome c oxidoreductase (cytochrome b-c1 complex, complex III, CIII) and cytochrome c oxidase (complex IV, CIV), that cooperate to transfer electrons derived from NADH and succinate to molecular oxygen, creating an electrochemical gradient over the inner membrane that drives transmembrane transport and the ATP synthase. Cytochrome c oxidase is the component of the respiratory chain that catalyzes the reduction of oxygen to water. Electrons originating from reduced cytochrome c in the intermembrane space (IMS) are transferred via the dinuclear copper A center (CU(A)) of subunit 2 and heme A of subunit 1 to the active site in subunit 1, a binuclear center (BNC) formed by heme A3 and copper B (CU(B)). The BNC reduces molecular oxygen to 2 water molecules using 4 electrons from cytochrome c in the IMS and 4 protons from the mitochondrial matrix. This Ornithorhynchus anatinus (Duckbill platypus) protein is Cytochrome c oxidase subunit 2 (MT-CO2).